Here is a 297-residue protein sequence, read N- to C-terminus: Tyrosine recombinase XerD (297 aa).

The Core-binding (CB) domain occupies 2–86 (KKLDPIIEQF…CLRKFFRFLC (85 aa)). Residues 107 to 291 (QLPKSLSEEQ…AKTRLKSIHK (185 aa)) enclose the Tyr recombinase domain. Residues R147, K171, H243, R246, and H269 contribute to the active site. Y278 functions as the O-(3'-phospho-DNA)-tyrosine intermediate in the catalytic mechanism.

It belongs to the 'phage' integrase family. XerD subfamily. Forms a cyclic heterotetrameric complex composed of two molecules of XerC and two molecules of XerD.

The protein resides in the cytoplasm. Site-specific tyrosine recombinase, which acts by catalyzing the cutting and rejoining of the recombining DNA molecules. The XerC-XerD complex is essential to convert dimers of the bacterial chromosome into monomers to permit their segregation at cell division. It also contributes to the segregational stability of plasmids. In Haemophilus ducreyi (strain 35000HP / ATCC 700724), this protein is Tyrosine recombinase XerD.